The following is a 445-amino-acid chain: Phosphoglucosamine mutase (445 aa).

The active-site Phosphoserine intermediate is Ser-102. 4 residues coordinate Mg(2+): Ser-102, Asp-241, Asp-243, and Asp-245. Ser-102 carries the post-translational modification Phosphoserine.

This sequence belongs to the phosphohexose mutase family. Requires Mg(2+) as cofactor. In terms of processing, activated by phosphorylation.

It carries out the reaction alpha-D-glucosamine 1-phosphate = D-glucosamine 6-phosphate. Functionally, catalyzes the conversion of glucosamine-6-phosphate to glucosamine-1-phosphate. The polypeptide is Phosphoglucosamine mutase (Shewanella piezotolerans (strain WP3 / JCM 13877)).